Here is a 62-residue protein sequence, read N- to C-terminus: Venom peptide SjAPI-2 (62 aa).

5 disulfide bridges follow: cysteine 4–cysteine 40, cysteine 14–cysteine 36, cysteine 18–cysteine 32, cysteine 22–cysteine 60, and cysteine 42–cysteine 54. The 57-residue stretch at 4-60 (CRISGEVFTWCGTTCPLTCENFRNPPKHCPQGCFVGCMCRRGLVRHRNGRCVRPPRC) folds into the TIL domain.

The protein belongs to the serine protease inhibitor-like (TIL domain-containing) family. In terms of tissue distribution, expressed by the venom gland.

Its subcellular location is the secreted. Its function is as follows. Serine protease inhibitor. The sequence is that of Venom peptide SjAPI-2 from Scorpiops jendeki (Scorpion).